Here is a 106-residue protein sequence, read N- to C-terminus: Biogenesis of lysosome-related organelles complex 1 subunit BLS1 (106 aa).

The protein belongs to the BLOC1S1 family. In terms of assembly, component of the biogenesis of lysosome-related organelles complex-1 (BLOC-1).

The protein localises to the endosome. Its function is as follows. Component of the biogenesis of lysosome-related organelles complex-1 (BLOC-1), a complex involved in endosomal cargo sorting. This Candida glabrata (strain ATCC 2001 / BCRC 20586 / JCM 3761 / NBRC 0622 / NRRL Y-65 / CBS 138) (Yeast) protein is Biogenesis of lysosome-related organelles complex 1 subunit BLS1 (BLS1).